The sequence spans 650 residues: Probable E3 ubiquitin ligase complex SCF subunit scon-2 (650 aa).

Positions 124-170 (IDFISALPVELAQKVLCYLDTVSLTKAAQVSQRWRTLADSDAVWVRM) constitute an F-box domain. The interval 200–244 (QRQLAKGGPQGRVTELADSHDSQDRSVNQHGKRPAAEAEEEDPIK) is disordered. A compositionally biased stretch (basic and acidic residues) spans 214–223 (ELADSHDSQD). WD repeat units follow at residues 292 to 320 (GHEN…KIWN), 332 to 360 (GHTA…KVWN), 372 to 400 (AHTD…KIFD), 411 to 441 (GHSD…KLWD), and 453 to 488 (GHVG…AMSV). Positions 482-525 (NQDAMSVSSGGSGSPSMSHAQIERAGSPGSHSSSHNLLPSSLPS) are disordered. Composition is skewed to low complexity over residues 487 to 499 (SVSS…PSMS) and 507 to 525 (GSPG…SLPS). WD repeat units lie at residues 528–564 (EDVR…RLWD), 576–604 (GHLE…KTWE), and 616–644 (GHCG…RLHS).

It belongs to the WD repeat MET30/SCONB/SCON-2 family. As to quaternary structure, component of the SCF(scon-2) E3 ubiquitin ligase complex.

Its pathway is protein modification; protein ubiquitination. Component of the SCF(scon-2) E3 ubiquitin ligase complex involved in the regulation of sulfur metabolite repression, probably by mediating the inactivation or degradation of the metR transcription factor. In Neurospora crassa (strain ATCC 24698 / 74-OR23-1A / CBS 708.71 / DSM 1257 / FGSC 987), this protein is Probable E3 ubiquitin ligase complex SCF subunit scon-2 (scon-2).